The sequence spans 217 residues: Putative thymidylate synthase (217 aa).

Residue Cys139 is part of the active site.

Belongs to the thymidylate synthase family. Archaeal-type ThyA subfamily. As to quaternary structure, monomer.

The protein resides in the cytoplasm. It functions in the pathway pyrimidine metabolism; dTTP biosynthesis. In terms of biological role, may catalyze the biosynthesis of dTMP using an unknown cosubstrate. The chain is Putative thymidylate synthase from Methanococcoides burtonii (strain DSM 6242 / NBRC 107633 / OCM 468 / ACE-M).